The following is a 232-amino-acid chain: Sugar fermentation stimulation protein homolog (232 aa).

The protein belongs to the SfsA family.

The polypeptide is Sugar fermentation stimulation protein homolog (Alkaliphilus metalliredigens (strain QYMF)).